We begin with the raw amino-acid sequence, 412 residues long: Isocitrate dehydrogenase [NADP] cytoplasmic (412 aa).

NADP(+)-binding positions include 76-78 (TIT) and R83. T78 is a substrate binding site. Substrate contacts are provided by residues 95-101 (SPNGTIR), R110, and R133. D253 contacts Mn(2+). Position 261 (K261) interacts with NADP(+). D276 is a binding site for Mn(2+). Residues 309 to 314 (GTVTRH) and N327 contribute to the NADP(+) site.

It belongs to the isocitrate and isopropylmalate dehydrogenases family. In terms of assembly, homodimer. Mg(2+) serves as cofactor. Mn(2+) is required as a cofactor.

It is found in the cytoplasm. It catalyses the reaction D-threo-isocitrate + NADP(+) = 2-oxoglutarate + CO2 + NADPH. The polypeptide is Isocitrate dehydrogenase [NADP] cytoplasmic (idhC) (Dictyostelium discoideum (Social amoeba)).